We begin with the raw amino-acid sequence, 344 residues long: tRNA(Ile)-lysidine synthase (344 aa).

35–40 (SGGPDS) is a binding site for ATP.

It belongs to the tRNA(Ile)-lysidine synthase family.

The protein resides in the cytoplasm. It carries out the reaction cytidine(34) in tRNA(Ile2) + L-lysine + ATP = lysidine(34) in tRNA(Ile2) + AMP + diphosphate + H(+). Ligates lysine onto the cytidine present at position 34 of the AUA codon-specific tRNA(Ile) that contains the anticodon CAU, in an ATP-dependent manner. Cytidine is converted to lysidine, thus changing the amino acid specificity of the tRNA from methionine to isoleucine. This chain is tRNA(Ile)-lysidine synthase, found in Methylobacterium sp. (strain 4-46).